The sequence spans 57 residues: Protein translocase subunit SecE (57 aa).

Residues 34–54 form a helical membrane-spanning segment; the sequence is AGILLIGAIGFLVFLIMGGIV.

Belongs to the SecE/SEC61-gamma family. As to quaternary structure, component of the Sec protein translocase complex. Heterotrimer consisting of SecY (alpha), SecG (beta) and SecE (gamma) subunits. The heterotrimers can form oligomers, although 1 heterotrimer is thought to be able to translocate proteins. Interacts with the ribosome. May interact with SecDF, and other proteins may be involved.

It is found in the cell membrane. In terms of biological role, essential subunit of the Sec protein translocation channel SecYEG. Clamps together the 2 halves of SecY. May contact the channel plug during translocation. The protein is Protein translocase subunit SecE of Halobacterium salinarum (strain ATCC 29341 / DSM 671 / R1).